Consider the following 372-residue polypeptide: Pristinol synthase (372 aa).

The segment covering 1–12 (MAHETTSGRRLP) has biased composition (basic and acidic residues). A disordered region spans residues 1–23 (MAHETTSGRRLPDPTSPSDPTRR). Mg(2+) contacts are provided by aspartate 100 and aspartate 104. The short motif at 100–104 (DDQFD) is the DDXXD motif element. Position 197 (arginine 197) interacts with substrate. Residues asparagine 243 and serine 247 each contribute to the Mg(2+) site. Substrate is bound at residue lysine 250. Glutamate 251 is a binding site for Mg(2+). Residue 337–338 (RY) coordinates substrate. The tract at residues 349 to 372 (GRRRPWDGLTTATGTASPRHPRRA) is disordered.

Belongs to the terpene synthase family. It depends on Mg(2+) as a cofactor.

The enzyme catalyses (2E,6E)-farnesyl diphosphate + H2O = (+)-(2S,3R,9R)-pristinol + diphosphate. Its pathway is secondary metabolite biosynthesis; terpenoid biosynthesis. In terms of biological role, catalyzes the conversion of (2E,6E)-farnesyl diphosphate (FPP) to yield a new 5-8 bicyclic (pristinane) sesquiterpenol (+)-(2S,3R,9R)-pristinol via a 1,11-cyclization, which requires the abstraction of the pyrophosphate from FPP to yield the humulyl cation. The only accepted substrate is farnesyl diphosphate (FPP). In Streptomyces pristinaespiralis (strain ATCC 25486 / DSM 40338 / CBS 914.69 / JCM 4507 / KCC S-0507 / NBRC 13074 / NRRL 2958 / 5647), this protein is Pristinol synthase.